Here is a 208-residue protein sequence, read N- to C-terminus: Large ribosomal subunit protein uL4 (208 aa).

The protein belongs to the universal ribosomal protein uL4 family. In terms of assembly, part of the 50S ribosomal subunit.

One of the primary rRNA binding proteins, this protein initially binds near the 5'-end of the 23S rRNA. It is important during the early stages of 50S assembly. It makes multiple contacts with different domains of the 23S rRNA in the assembled 50S subunit and ribosome. In terms of biological role, forms part of the polypeptide exit tunnel. This chain is Large ribosomal subunit protein uL4, found in Solibacter usitatus (strain Ellin6076).